A 152-amino-acid polypeptide reads, in one-letter code: UPF0266 membrane protein YobD (152 aa).

3 consecutive transmembrane segments (helical) span residues 6-26 (LVLILFIAALLAFAIYDQFIM), 45-65 (IDSVIFVGLIVILIYNNVTNH), and 67-87 (AQITTWLLSALALMGFYIFWI).

It belongs to the UPF0266 family.

Its subcellular location is the cell inner membrane. The chain is UPF0266 membrane protein YobD from Escherichia fergusonii (strain ATCC 35469 / DSM 13698 / CCUG 18766 / IAM 14443 / JCM 21226 / LMG 7866 / NBRC 102419 / NCTC 12128 / CDC 0568-73).